Reading from the N-terminus, the 83-residue chain is Protein midgut expression 1 (83 aa).

In terms of tissue distribution, endoderm-specific pattern of expression during embryogenesis; anterior and posterior midgut primordia.

Functionally, involved in morphogenesis and development. In Drosophila melanogaster (Fruit fly), this protein is Protein midgut expression 1 (mex1).